A 109-amino-acid chain; its full sequence is Nucleoid-associated protein Ldb1634 (109 aa).

A disordered region spans residues 18 to 40 (MMKQAKKLQEQMAQEQENITTQE).

This sequence belongs to the YbaB/EbfC family. Homodimer.

It localises to the cytoplasm. It is found in the nucleoid. Its function is as follows. Binds to DNA and alters its conformation. May be involved in regulation of gene expression, nucleoid organization and DNA protection. The sequence is that of Nucleoid-associated protein Ldb1634 from Lactobacillus delbrueckii subsp. bulgaricus (strain ATCC 11842 / DSM 20081 / BCRC 10696 / JCM 1002 / NBRC 13953 / NCIMB 11778 / NCTC 12712 / WDCM 00102 / Lb 14).